Here is a 367-residue protein sequence, read N- to C-terminus: Palmitoyltransferase ERF2 (367 aa).

The segment covering methionine 1 to serine 23 has biased composition (polar residues). The segment at methionine 1–glutamate 32 is disordered. Over methionine 1–lysine 87 the chain is Cytoplasmic. The helical transmembrane segment at tyrosine 88–glutamate 108 threads the bilayer. At threonine 109–proline 121 the chain is on the lumenal side. The helical transmembrane segment at cysteine 122–alanine 142 threads the bilayer. The Cytoplasmic segment spans residues threonine 143–tyrosine 229. Residues lysine 185–phenylalanine 235 form the DHHC domain. The S-palmitoyl cysteine intermediate role is filled by cysteine 215. The chain crosses the membrane as a helical span at residues phenylalanine 230 to leucine 250. Topologically, residues lysine 251 to proline 262 are lumenal. Residues valine 263–isoleucine 283 traverse the membrane as a helical segment. Residues tyrosine 284–valine 367 lie on the Cytoplasmic side of the membrane.

It belongs to the DHHC palmitoyltransferase family. ERF2/ZDHHC9 subfamily. As to quaternary structure, interacts with ERF4. Autopalmitoylated.

The protein resides in the endoplasmic reticulum membrane. The catalysed reaction is L-cysteinyl-[protein] + hexadecanoyl-CoA = S-hexadecanoyl-L-cysteinyl-[protein] + CoA. The ERF2-ERF4 complex is a palmitoyltransferase specific for Ras proteins. The chain is Palmitoyltransferase ERF2 (ERF2) from Eremothecium gossypii (strain ATCC 10895 / CBS 109.51 / FGSC 9923 / NRRL Y-1056) (Yeast).